The sequence spans 430 residues: Asparagine--tRNA ligase (430 aa).

Belongs to the class-II aminoacyl-tRNA synthetase family. In terms of assembly, homodimer.

Its subcellular location is the cytoplasm. It catalyses the reaction tRNA(Asn) + L-asparagine + ATP = L-asparaginyl-tRNA(Asn) + AMP + diphosphate + H(+). The polypeptide is Asparagine--tRNA ligase (Staphylococcus aureus (strain MW2)).